Consider the following 276-residue polypeptide: MLMITSFANPRVAQAFVDYMATQGVILTIQQHNQSDIWLADESQAERVRVELARFIENPGDPRYLAASWQSGQTNSGLRYRRFPFLATLRERAGPVTWIVMLACVVVYIAMSLIGDQTVMVWLAWPFDPVLKFEVWRYFTHIFMHFSLMHILFNLLWWWYLGGAVEKRLGSGKLIVITVISALLSGYVQQKFSGPWFGGLSGVVYALMGYVWLRGERDPQSGIYLQRGLIIFALLWIVAGWFDWFGMSMANGAHIAGLIVGLAMAFVDTLNARKRT.

6 helical membrane passes run 94-114 (GPVTWIVMLACVVVYIAMSLI), 142-162 (IFMHFSLMHILFNLLWWWYLG), 169-189 (LGSGKLIVITVISALLSGYVQ), 192-212 (FSGPWFGGLSGVVYALMGYVW), 229-249 (LIIFALLWIVAGWFDWFGMSM), and 250-270 (ANGAHIAGLIVGLAMAFVDTL). The active-site Nucleophile is Ser201. His254 is a catalytic residue.

The protein belongs to the peptidase S54 family.

The protein localises to the cell inner membrane. It catalyses the reaction Cleaves type-1 transmembrane domains using a catalytic dyad composed of serine and histidine that are contributed by different transmembrane domains.. Rhomboid-type serine protease that catalyzes intramembrane proteolysis. This chain is Rhomboid protease GlpG, found in Salmonella typhi.